Reading from the N-terminus, the 286-residue chain is Pantothenate synthetase (286 aa).

30–37 is an ATP binding site; the sequence is MGNLHSGH. His-37 serves as the catalytic Proton donor. Gln-61 is a (R)-pantoate binding site. Gln-61 contacts beta-alanine. 149–152 is an ATP binding site; the sequence is GQKD. Gln-155 contributes to the (R)-pantoate binding site. ATP contacts are provided by residues Val-178 and 186–189; that span reads LSSR.

The protein belongs to the pantothenate synthetase family. In terms of assembly, homodimer.

The protein localises to the cytoplasm. It catalyses the reaction (R)-pantoate + beta-alanine + ATP = (R)-pantothenate + AMP + diphosphate + H(+). Its pathway is cofactor biosynthesis; (R)-pantothenate biosynthesis; (R)-pantothenate from (R)-pantoate and beta-alanine: step 1/1. In terms of biological role, catalyzes the condensation of pantoate with beta-alanine in an ATP-dependent reaction via a pantoyl-adenylate intermediate. The chain is Pantothenate synthetase from Pseudomonas fluorescens (strain Pf0-1).